A 175-amino-acid chain; its full sequence is uncharacterized protein (175 aa).

Disordered regions lie at residues 1 to 32 (MSHKDFNGLQAPQLLSSSSPVAKKQSSHKLRH) and 156 to 175 (KQKQAKRAANTRQRTYKYRQ). A compositionally biased stretch (low complexity) spans 14–24 (LLSSSSPVAKK).

This is an uncharacterized protein from Mycoplasma pneumoniae (strain ATCC 29342 / M129 / Subtype 1) (Mycoplasmoides pneumoniae).